We begin with the raw amino-acid sequence, 279 residues long: NH(3)-dependent NAD(+) synthetase (279 aa).

46 to 53 (GISGGQDS) contributes to the ATP binding site. Asp52 provides a ligand contact to Mg(2+). Arg145 is a deamido-NAD(+) binding site. Thr165 lines the ATP pocket. Glu170 provides a ligand contact to Mg(2+). Deamido-NAD(+)-binding residues include Lys178 and Asp185. ATP is bound by residues Lys194 and Thr216. Deamido-NAD(+) is bound at residue 265-266 (HK).

This sequence belongs to the NAD synthetase family. Homodimer.

It carries out the reaction deamido-NAD(+) + NH4(+) + ATP = AMP + diphosphate + NAD(+) + H(+). The protein operates within cofactor biosynthesis; NAD(+) biosynthesis; NAD(+) from deamido-NAD(+) (ammonia route): step 1/1. Its function is as follows. Catalyzes the ATP-dependent amidation of deamido-NAD to form NAD. Uses ammonia as a nitrogen source. In Rhodococcus opacus (strain B4), this protein is NH(3)-dependent NAD(+) synthetase.